Consider the following 1013-residue polypeptide: Lysosomal alpha-mannosidase (1013 aa).

Positions 1–49 (MGTGPLTSGVRAGGGNTGWLWMSSCNLGSPVLPISFLFWLLLAAPGARA) are cleaved as a signal peptide. Cystine bridges form between C55/C358 and C268/C273. Zn(2+) contacts are provided by H72, D74, and D196. The active-site Nucleophile is the D196. 3 N-linked (GlcNAc...) asparagine glycosylation sites follow: N310, N345, and N367. A disulfide bridge links C412 with C472. H446 contributes to the Zn(2+) binding site. 8 N-linked (GlcNAc...) asparagine glycosylation sites follow: N489, N497, N544, N633, N646, N693, N767, and N931. The cysteines at positions 493 and 501 are disulfide-linked.

Belongs to the glycosyl hydrolase 38 family. The cofactor is Zn(2+).

The protein localises to the lysosome. The enzyme catalyses Hydrolysis of terminal, non-reducing alpha-D-mannose residues in alpha-D-mannosides.. Necessary for the catabolism of N-linked carbohydrates released during glycoprotein turnover. The polypeptide is Lysosomal alpha-mannosidase (Man2b1) (Mus musculus (Mouse)).